The chain runs to 1082 residues: AP-3 complex subunit beta-2 (1082 aa).

Positions 1-30 are disordered; that stretch reads MSAAPAYSEDKGGSAGPGEPEYGHDPASGG. Ser272 and Ser282 each carry phosphoserine. A compositionally biased stretch (basic and acidic residues) spans 666-677; that stretch reads NREKRKEKEKPF. Positions 666–801 are disordered; it reads NREKRKEKEK…KTPPGSKSAP (136 aa). The segment covering 691-700 has biased composition (acidic residues); it reads ADSEPESESE. Positions 704–715 are enriched in low complexity; that stretch reads KSSSGSGSGESS. Composition is skewed to acidic residues over residues 716-726 and 775-784; these read SESDNEEEDEE and VTSESEEEQV.

Belongs to the adaptor complexes large subunit family. Adaptor protein complex 3 (AP-3) is a heterotetramer composed of two large adaptins (delta-type subunit AP3D1 and beta-type subunit AP3B1 or AP3B2), a medium adaptin (mu-type subunit AP3M1 or AP3M2) and a small adaptin (sigma-type subunit APS1 or AP3S2). AP-3 associates with the BLOC-1 complex.

The protein localises to the cytoplasmic vesicle. The protein resides in the clathrin-coated vesicle membrane. Its subcellular location is the golgi apparatus. Functionally, subunit of non-clathrin- and clathrin-associated adaptor protein complex 3 (AP-3) that plays a role in protein sorting in the late-Golgi/trans-Golgi network (TGN) and/or endosomes. The AP complexes mediate both the recruitment of clathrin to membranes and the recognition of sorting signals within the cytosolic tails of transmembrane cargo molecules. AP-3 appears to be involved in the sorting of a subset of transmembrane proteins targeted to lysosomes and lysosome-related organelles. In concert with the BLOC-1 complex, AP-3 is required to target cargos into vesicles assembled at cell bodies for delivery into neurites and nerve terminals. This is AP-3 complex subunit beta-2 (Ap3b2) from Mus musculus (Mouse).